The sequence spans 309 residues: MIIVTGGAGLIGSNIIAALNDMGRRDILVVDNLTDGTKFVNLVDLDIADYCDKEDFIASIIAGDDFGDIDAIFHQGACSATTEWNGKYLMQNNYEYSKELLHYCLLREIPFFYASSAATYGDKTDFIEERQFEGPLNVYGYSKFLFDEYVRQILPQATSPVCGFKYFNVYGPREQHKGSMASVAFHLNNQMLKGENPKLFAGSEHFLRDFVYVGDVAKVNLWAWQHGISGIYNCGTGRAESFEQVARAVLNYHGKGEIETIPFPEHLKSRYQEYTQANLTKLRAAGYQAEFKSVAEGVAEYMQWLNRKS.

NADP(+)-binding positions include 10–11 (LI), 31–32 (DN), K38, K53, 75–79 (QGACS), and N92. Y139 (proton acceptor) is an active-site residue. K143 is an NADP(+) binding site. A substrate-binding site is contributed by N168. 2 residues coordinate NADP(+): V169 and K177. Catalysis depends on K177, which acts as the Proton acceptor. Substrate is bound by residues S179, H186, 200-203 (FAGS), R208, and Y271.

The protein belongs to the NAD(P)-dependent epimerase/dehydratase family. HldD subfamily. Homopentamer. NADP(+) serves as cofactor.

The catalysed reaction is ADP-D-glycero-beta-D-manno-heptose = ADP-L-glycero-beta-D-manno-heptose. It participates in nucleotide-sugar biosynthesis; ADP-L-glycero-beta-D-manno-heptose biosynthesis; ADP-L-glycero-beta-D-manno-heptose from D-glycero-beta-D-manno-heptose 7-phosphate: step 4/4. Catalyzes the interconversion between ADP-D-glycero-beta-D-manno-heptose and ADP-L-glycero-beta-D-manno-heptose via an epimerization at carbon 6 of the heptose. This Histophilus somni (strain 2336) (Haemophilus somnus) protein is ADP-L-glycero-D-manno-heptose-6-epimerase.